The following is a 423-amino-acid chain: Histidine--tRNA ligase (423 aa).

It belongs to the class-II aminoacyl-tRNA synthetase family. Homodimer.

It localises to the cytoplasm. It catalyses the reaction tRNA(His) + L-histidine + ATP = L-histidyl-tRNA(His) + AMP + diphosphate + H(+). This chain is Histidine--tRNA ligase, found in Orientia tsutsugamushi (strain Ikeda) (Rickettsia tsutsugamushi).